We begin with the raw amino-acid sequence, 90 residues long: Probable Fe(2+)-trafficking protein (90 aa).

It belongs to the Fe(2+)-trafficking protein family.

Its function is as follows. Could be a mediator in iron transactions between iron acquisition and iron-requiring processes, such as synthesis and/or repair of Fe-S clusters in biosynthetic enzymes. The protein is Probable Fe(2+)-trafficking protein of Pseudomonas putida (strain W619).